Here is a 161-residue protein sequence, read N- to C-terminus: 2-C-methyl-D-erythritol 2,4-cyclodiphosphate synthase (161 aa).

Positions 10 and 12 each coordinate a divalent metal cation. Residues 10 to 12 (DVH) and 36 to 37 (HS) contribute to the 4-CDP-2-C-methyl-D-erythritol 2-phosphate site. Histidine 44 contributes to the a divalent metal cation binding site. Residues 58 to 60 (DIG), 63 to 67 (FPDTD), 102 to 108 (AQVPKMA), 134 to 137 (TTTE), phenylalanine 141, and arginine 144 each bind 4-CDP-2-C-methyl-D-erythritol 2-phosphate.

This sequence belongs to the IspF family. In terms of assembly, homotrimer. A divalent metal cation serves as cofactor.

The catalysed reaction is 4-CDP-2-C-methyl-D-erythritol 2-phosphate = 2-C-methyl-D-erythritol 2,4-cyclic diphosphate + CMP. Its pathway is isoprenoid biosynthesis; isopentenyl diphosphate biosynthesis via DXP pathway; isopentenyl diphosphate from 1-deoxy-D-xylulose 5-phosphate: step 4/6. Its function is as follows. Involved in the biosynthesis of isopentenyl diphosphate (IPP) and dimethylallyl diphosphate (DMAPP), two major building blocks of isoprenoid compounds. Catalyzes the conversion of 4-diphosphocytidyl-2-C-methyl-D-erythritol 2-phosphate (CDP-ME2P) to 2-C-methyl-D-erythritol 2,4-cyclodiphosphate (ME-CPP) with a corresponding release of cytidine 5-monophosphate (CMP). The polypeptide is 2-C-methyl-D-erythritol 2,4-cyclodiphosphate synthase (Shewanella baltica (strain OS223)).